A 490-amino-acid chain; its full sequence is GTPase Der (490 aa).

EngA-type G domains follow at residues 3–166 (PVIA…PRDD) and 196–369 (IKIA…KSAV). GTP-binding positions include 9-16 (GRPNVGKS), 56-60 (DTGGI), and 118-121 (NKVD). The interval 162 to 189 (FPRDDDEPAEGEEEEVVAEGEEAKRIPG) is disordered. A compositionally biased stretch (acidic residues) spans 164 to 181 (RDDDEPAEGEEEEVVAEG). GTP-binding positions include 202-209 (GRPNVGKS), 249-253 (DTAGV), and 314-317 (NKWD). The 85-residue stretch at 370 to 454 (TRWPTSRLTQ…PIRIEFKGGE (85 aa)) folds into the KH-like domain. Positions 453–490 (GENPYEGNKNTLTDRQVNKKRRLMSHNKKASKKRRDKK) are disordered. Residues 470-490 (NKKRRLMSHNKKASKKRRDKK) show a composition bias toward basic residues.

This sequence belongs to the TRAFAC class TrmE-Era-EngA-EngB-Septin-like GTPase superfamily. EngA (Der) GTPase family. As to quaternary structure, associates with the 50S ribosomal subunit.

GTPase that plays an essential role in the late steps of ribosome biogenesis. The sequence is that of GTPase Der from Pseudomonas fluorescens (strain Pf0-1).